The primary structure comprises 112 residues: UPF0145 protein RB3016 (112 aa).

Belongs to the UPF0145 family.

This is UPF0145 protein RB3016 from Rhodopirellula baltica (strain DSM 10527 / NCIMB 13988 / SH1).